We begin with the raw amino-acid sequence, 792 residues long: Phenylalanine--tRNA ligase beta subunit (792 aa).

Residues 39-147 (GESLGQVVVA…DDAPVGQALA (109 aa)) enclose the tRNA-binding domain. The region spanning 400-475 (PQPVHIRLRR…RIHGYDRVPT (76 aa)) is the B5 domain. Aspartate 453, aspartate 459, glutamate 462, and glutamate 463 together coordinate Mg(2+). The FDX-ACB domain maps to 698–791 (SRFPSVRRDL…IEREHRARIR (94 aa)).

This sequence belongs to the phenylalanyl-tRNA synthetase beta subunit family. Type 1 subfamily. As to quaternary structure, tetramer of two alpha and two beta subunits. It depends on Mg(2+) as a cofactor.

The protein resides in the cytoplasm. The enzyme catalyses tRNA(Phe) + L-phenylalanine + ATP = L-phenylalanyl-tRNA(Phe) + AMP + diphosphate + H(+). This is Phenylalanine--tRNA ligase beta subunit from Xanthomonas axonopodis pv. citri (strain 306).